We begin with the raw amino-acid sequence, 1575 residues long: Ras GTPase-activating-like protein IQGAP2 (1575 aa).

Phosphoserine is present on Ser16. A Calponin-homology (CH) domain is found at 41 to 156; the sequence is LCHLEEAKRW…YCIHALSLYL (116 aa). Thr356 carries the phosphothreonine modification. Positions 594-627 constitute a WW domain; the sequence is ESSEGSWVTLNVQEKYNYYYNTDSKEGSWVPPEL. A phosphoserine mark is found at Ser595 and Ser599. IQ domains follow at residues 690-719, 720-749, and 750-779; these read QTES…VFAG, NVDS…YFED, and HKNE…SENP. Residues Thr782, Thr881, Thr1002, and Thr1269 each carry the phosphothreonine modification. The 250-residue stretch at 933–1182 folds into the Ras-GAP domain; the sequence is YLLLKLFKTA…QEFRKYFQEA (250 aa). Phosphoserine is present on residues Ser1279 and Ser1461.

Its function is as follows. Binds to activated CDC42 and RAC1 but does not seem to stimulate their GTPase activity. Associates with calmodulin. The chain is Ras GTPase-activating-like protein IQGAP2 (Iqgap2) from Mus musculus (Mouse).